A 123-amino-acid chain; its full sequence is Small ribosomal subunit protein uS12 (123 aa).

Residues 1–27 (MPTIQQLIRKPRQPKIKRSKSMHLQEC) are disordered. Residues 9–21 (RKPRQPKIKRSKS) are compositionally biased toward basic residues. Aspartate 89 is modified (3-methylthioaspartic acid).

Belongs to the universal ribosomal protein uS12 family. Part of the 30S ribosomal subunit. Contacts proteins S8 and S17. May interact with IF1 in the 30S initiation complex.

In terms of biological role, with S4 and S5 plays an important role in translational accuracy. Interacts with and stabilizes bases of the 16S rRNA that are involved in tRNA selection in the A site and with the mRNA backbone. Located at the interface of the 30S and 50S subunits, it traverses the body of the 30S subunit contacting proteins on the other side and probably holding the rRNA structure together. The combined cluster of proteins S8, S12 and S17 appears to hold together the shoulder and platform of the 30S subunit. The protein is Small ribosomal subunit protein uS12 of Roseobacter denitrificans (strain ATCC 33942 / OCh 114) (Erythrobacter sp. (strain OCh 114)).